Here is an 80-residue protein sequence, read N- to C-terminus: DNA-directed RNA polymerase RPB10 homolog (80 aa).

4 residues coordinate Zn(2+): Cys7, Cys10, Cys65, and Cys66.

It belongs to the archaeal RpoN/eukaryotic RPB10 RNA polymerase subunit family. In terms of assembly, part of the viral DNA-directed RNA polymerase that consists of 8 polII-like subunits (RPB1, RPB2, RPB3, RPB5, RPB6, RPB7, RPB9, RPB10), a capping enzyme and a termination factor.

It localises to the host cytoplasm. Its function is as follows. Component of the DNA-directed RNA polymerase (RNAP) that catalyzes the transcription in the cytoplasm of viral DNA into RNA using the four ribonucleoside triphosphates as substrates. This African swine fever virus (strain Badajoz 1971 Vero-adapted) (Ba71V) protein is DNA-directed RNA polymerase RPB10 homolog.